Here is a 410-residue protein sequence, read N- to C-terminus: MVLSQRQRDELNRAIADYLRSNGYEEAYSTFKKEAELDNNEELDKKYAGLLEKKWTSVIRLQKKVMELESKLNEAKEEITLGGPVSQKRDPKEWIPRPPERYALSGHRSPVTRVIFHPVFSVMVSASEDATIKVWDYETGDFERTLKGHTDSVQDISFDLTGKLLASCSADMTIKLWDFQSFECIRTMHGHDHNVSSVAIMPNGDHIISASRDKTMKMWEVATGYCVKTFTGHREWVRMVRPNQDGTLIASCSNDQTVRVWVVASKECKAELREHEHVVECISWAPESAHPTILDATSSESKKSGKPGPFLLSGSRDKTIKMWDVSTGMCLMTLVGHDNWVRGVLFHPGGKFIVTCADDKTLRIWDYKNKRCMKTLCAHEHFVTSLDFHKAAPYVVTGSVDQTVKVWECR.

The region spanning 7 to 39 (QRDELNRAIADYLRSNGYEEAYSTFKKEAELDN) is the LisH domain. Residues 32–82 (KKEAELDNNEELDKKYAGLLEKKWTSVIRLQKKVMELESKLNEAKEEITLG) adopt a coiled-coil conformation. WD repeat units follow at residues 106–147 (GHRS…RTLK), 148–189 (GHTD…RTMH), 190–229 (GHDHNVSSVAIMPNGDHIISASRDKTMKMWEVATGYCVKT), 232–271 (GHREWVRMVRPNQDGTLIASCSNDQTVRVWVVASKECKAE), 274–333 (EHEH…CLMT), 336–375 (GHDNWVRGVLFHPGGKFIVTCADDKTLRIWDYKNKRCMKT), and 378–410 (AHEHFVTSLDFHKAAPYVVTGSVDQTVKVWECR).

The protein belongs to the WD repeat LIS1/nudF family. In terms of assembly, can self-associate. Component of the cytosolic PAF-AH (I) heterotetrameric enzyme, which is composed of PAFAH1B1 (beta), PAFAH1B2 (alpha2) and PAFAH1B3 (alpha1) subunits. The catalytic activity of the enzyme resides in the alpha1 (PAFAH1B3) and alpha2 (PAFAH1B2) subunits, whereas the beta subunit (PAFAH1B1) has regulatory activity. Trimer formation is not essential for the catalytic activity. Interacts with dynein, dynactin, nde1 and ndel1.

It is found in the cytoplasm. The protein localises to the cytoskeleton. Its subcellular location is the microtubule organizing center. The protein resides in the centrosome. In terms of biological role, regulatory subunit (beta subunit) of the cytosolic type I platelet-activating factor (PAF) acetylhydrolase (PAF-AH (I)), an enzyme that catalyzes the hydrolyze of the acetyl group at the sn-2 position of PAF and its analogs and participates in the PAF inactivation. Positively regulates the activity of the minus-end directed microtubule motor protein dynein. May enhance dynein-mediated microtubule sliding by targeting dynein to the microtubule plus end. Required for several dynein- and microtubule-dependent processes such as the maintenance of Golgi integrity, the peripheral transport of microtubule fragments and the coupling of the nucleus and centrosome. May be required for proliferation of neuronal precursors and neuronal migration. This chain is Lissencephaly-1 homolog (pafah1b1), found in Tetraodon nigroviridis (Spotted green pufferfish).